The primary structure comprises 307 residues: DDRGK domain-containing protein 1 (307 aa).

Topologically, residues 1–2 are lumenal; the sequence is MD. Residues 3–23 traverse the membrane as a helical segment; that stretch reads LILLVGIAVALLVILATLYFL. At 24–307 the chain is on the cytoplasmic side; it reads QNKNKAAGEA…PVQSAAGGDS (284 aa). Composition is skewed to low complexity over residues 32-43 and 54-83; these read EAKPAAAAPRRG and RRAQ…PAAA. Residues 32-162 are disordered; that stretch reads EAKPAAAAPR…EEVEAEAERK (131 aa). The span at 117-162 shows a compositional bias: basic and acidic residues; that stretch reads KMEAKEQKRLQREHELQEREKRKVKEAKEDAERKQQEEVEAEAERK.

Belongs to the DDRGK1 family. As to quaternary structure, interacts with Atg9; the interaction is transient.

It is found in the endoplasmic reticulum membrane. In terms of biological role, substrate adapter for ufmylation, the covalent attachment of the ubiquitin-like modifier UFM1 to substrate proteins. Required for ufmylation of Atg9; protects the nervous system during aging, possibly by stabilizing Atg9 and supporting its function. The sequence is that of DDRGK domain-containing protein 1 from Drosophila willistoni (Fruit fly).